The chain runs to 993 residues: Testis-expressed protein 13C (993 aa).

Disordered stretches follow at residues 281–381 (QEET…SLKK), 520–547 (DSKS…SHSL), and 894–959 (FSKS…PVNW). Residues 325 to 335 (GMTSQGDSSSH) are compositionally biased toward polar residues. The segment covering 353–364 (SRSHSLEKKPVM) has biased composition (basic and acidic residues). Over residues 944–957 (ESQQQKPASCSSPV) the composition is skewed to polar residues. Residues 955–984 (SPVNWACPWCNAMNFPRNKVCSKCKRVRMP) form a RanBP2-type zinc finger.

It belongs to the TEX13 family.

This chain is Testis-expressed protein 13C, found in Homo sapiens (Human).